The following is a 360-amino-acid chain: Mediator of RNA polymerase II transcription subunit 6 (360 aa).

Disordered stretches follow at residues 186–238 (PAQP…NDPL) and 316–360 (AAAA…PGAA). Composition is skewed to low complexity over residues 190 to 205 (SAGA…YTAS) and 316 to 325 (AAAAAANANA).

This sequence belongs to the Mediator complex subunit 6 family. In terms of assembly, component of the Mediator complex.

The protein resides in the nucleus. In terms of biological role, component of the Mediator complex, a coactivator involved in the regulated transcription of nearly all RNA polymerase II-dependent genes. Mediator functions as a bridge to convey information from gene-specific regulatory proteins to the basal RNA polymerase II transcription machinery. Mediator is recruited to promoters by direct interactions with regulatory proteins and serves as a scaffold for the assembly of a functional preinitiation complex with RNA polymerase II and the general transcription factors. This Neurospora crassa (strain ATCC 24698 / 74-OR23-1A / CBS 708.71 / DSM 1257 / FGSC 987) protein is Mediator of RNA polymerase II transcription subunit 6 (med-6).